A 406-amino-acid chain; its full sequence is Alpha-1-antitrypsin (406 aa).

The signal sequence occupies residues 1-24 (MTSSISWGLLLLAGLCCLVPSFLA). S33 bears the Phosphoserine mark. N-linked (GlcNAc...) asparagine glycosylation is found at N59, N96, and N260. The tract at residues 362-381 (GTTVLEAVPMSIPPDVCFKN) is RCL. Residue S372 is modified to Phosphoserine.

This sequence belongs to the serpin family. In terms of assembly, interacts with CELA2A. Interacts with ERGIC3 and LMAN1/ERGIC53. Interacts with PRSS1/Trypsin. As to expression, plasma.

It is found in the secreted. Functionally, inhibitor of serine proteases. Can inhibit elastase, trypsin, chymotrypsin and plasmin. This is Alpha-1-antitrypsin from Meriones unguiculatus (Mongolian jird).